A 273-amino-acid chain; its full sequence is tRNA (guanine-N(7)-)-methyltransferase (273 aa).

The S-adenosyl-L-methionine site is built by glycine 86, glutamate 109, arginine 111, asparagine 142, alanine 143, and leucine 162. Aspartate 165 is a catalytic residue. The segment at 166–174 (PHFKKTKHK) is alphaC helix. Threonine 240 and glutamate 242 together coordinate S-adenosyl-L-methionine. The alpha6 helix stretch occupies residues 240 to 248 (TEEGKKVQR).

This sequence belongs to the class I-like SAM-binding methyltransferase superfamily. TrmB family. Catalytic component of the METTL1-WDR4 complex, composed of mettl1 and wdr4.

The protein localises to the nucleus. The enzyme catalyses guanosine(46) in tRNA + S-adenosyl-L-methionine = N(7)-methylguanosine(46) in tRNA + S-adenosyl-L-homocysteine. The catalysed reaction is a guanosine in mRNA + S-adenosyl-L-methionine = an N(7)-methylguanosine in mRNA + S-adenosyl-L-homocysteine. It catalyses the reaction a guanosine in miRNA + S-adenosyl-L-methionine = an N(7)-methylguanosine in miRNA + S-adenosyl-L-homocysteine. Its pathway is tRNA modification; N(7)-methylguanine-tRNA biosynthesis. Functionally, catalytic component of METTL1-WDR4 methyltransferase complex that mediates the formation of N(7)-methylguanine in a subset of RNA species, such as tRNAs, mRNAs and microRNAs (miRNAs). Catalyzes the formation of N(7)-methylguanine at position 46 (m7G46) in a large subset of tRNAs that contain the 5'-RAGGU-3' motif within the variable loop. M7G46 interacts with C13-G22 in the D-loop to stabilize tRNA tertiary structure and protect tRNAs from decay. Also acts as a methyltransferase for a subset of internal N(7)-methylguanine in mRNAs. Internal N(7)-methylguanine methylation of mRNAs in response to stress promotes their relocalization to stress granules, thereby suppressing their translation. Also methylates a specific subset of miRNAs. The polypeptide is tRNA (guanine-N(7)-)-methyltransferase (mettl1) (Xenopus laevis (African clawed frog)).